The sequence spans 977 residues: uncharacterized protein (977 aa).

The interval 100–152 is disordered; it reads ATSPLQQNGKSRDTEKPPSMKEKDLSSNSSSQHDKAFHERVDQGKNKSSTTKY. Composition is skewed to basic and acidic residues over residues 109–124 and 131–144; these read KSRD…EKDL and QHDK…DQGK. Phosphoserine is present on S165. Composition is skewed to polar residues over residues 166–175 and 183–193; these read PGQSVNSLKP and STKSSTSSEMH. A disordered region spans residues 166–194; it reads PGQSVNSLKPNSGDEVPSTKSSTSSEMHT.

This is an uncharacterized protein from Schizosaccharomyces pombe (strain 972 / ATCC 24843) (Fission yeast).